The sequence spans 134 residues: Phosphoribosyl-AMP cyclohydrolase (134 aa).

D78 lines the Mg(2+) pocket. C79 provides a ligand contact to Zn(2+). D80 and D82 together coordinate Mg(2+). Residues C96 and C103 each coordinate Zn(2+).

The protein belongs to the PRA-CH family. As to quaternary structure, homodimer. It depends on Mg(2+) as a cofactor. Zn(2+) serves as cofactor.

Its subcellular location is the cytoplasm. The enzyme catalyses 1-(5-phospho-beta-D-ribosyl)-5'-AMP + H2O = 1-(5-phospho-beta-D-ribosyl)-5-[(5-phospho-beta-D-ribosylamino)methylideneamino]imidazole-4-carboxamide. It functions in the pathway amino-acid biosynthesis; L-histidine biosynthesis; L-histidine from 5-phospho-alpha-D-ribose 1-diphosphate: step 3/9. In terms of biological role, catalyzes the hydrolysis of the adenine ring of phosphoribosyl-AMP. This chain is Phosphoribosyl-AMP cyclohydrolase, found in Cupriavidus necator (strain ATCC 17699 / DSM 428 / KCTC 22496 / NCIMB 10442 / H16 / Stanier 337) (Ralstonia eutropha).